Consider the following 334-residue polypeptide: 6-phosphogluconolactonase (334 aa).

Belongs to the cycloisomerase 2 family.

It catalyses the reaction 6-phospho-D-glucono-1,5-lactone + H2O = 6-phospho-D-gluconate + H(+). The protein operates within carbohydrate degradation; pentose phosphate pathway; D-ribulose 5-phosphate from D-glucose 6-phosphate (oxidative stage): step 2/3. Its function is as follows. Catalyzes the hydrolysis of 6-phosphogluconolactone to 6-phosphogluconate. This is 6-phosphogluconolactonase from Buchnera aphidicola subsp. Acyrthosiphon pisum (strain APS) (Acyrthosiphon pisum symbiotic bacterium).